We begin with the raw amino-acid sequence, 94 residues long: Small ribosomal subunit protein uS19 (94 aa).

The protein belongs to the universal ribosomal protein uS19 family.

Functionally, protein S19 forms a complex with S13 that binds strongly to the 16S ribosomal RNA. This Acidobacterium capsulatum (strain ATCC 51196 / DSM 11244 / BCRC 80197 / JCM 7670 / NBRC 15755 / NCIMB 13165 / 161) protein is Small ribosomal subunit protein uS19.